The primary structure comprises 350 residues: Hydroxymethylglutaryl-CoA synthase (350 aa).

Catalysis depends on glutamate 83, which acts as the Proton donor/acceptor. The active-site Acyl-thioester intermediate is the cysteine 115. The (3S)-3-hydroxy-3-methylglutaryl-CoA site is built by cysteine 115 and threonine 156. Arginine 204 contributes to the CoA binding site. Positions 206 and 239 each coordinate (3S)-3-hydroxy-3-methylglutaryl-CoA. Catalysis depends on histidine 239, which acts as the Proton donor/acceptor. Lysine 244 is a binding site for CoA. 2 residues coordinate (3S)-3-hydroxy-3-methylglutaryl-CoA: asparagine 271 and serine 301.

The protein belongs to the thiolase-like superfamily. Archaeal HMG-CoA synthase family. Interacts with acetoacetyl-CoA thiolase that catalyzes the precedent step in the pathway and with a DUF35 protein. The acetoacetyl-CoA thiolase/HMG-CoA synthase complex channels the intermediate via a fused CoA-binding site, which allows for efficient coupling of the endergonic thiolase reaction with the exergonic HMGCS reaction.

The catalysed reaction is acetoacetyl-CoA + acetyl-CoA + H2O = (3S)-3-hydroxy-3-methylglutaryl-CoA + CoA + H(+). Its pathway is metabolic intermediate biosynthesis; (R)-mevalonate biosynthesis; (R)-mevalonate from acetyl-CoA: step 2/3. Functionally, catalyzes the condensation of acetyl-CoA with acetoacetyl-CoA to form 3-hydroxy-3-methylglutaryl-CoA (HMG-CoA). Functions in the mevalonate (MVA) pathway leading to isopentenyl diphosphate (IPP), a key precursor for the biosynthesis of isoprenoid compounds that are building blocks of archaeal membrane lipids. The protein is Hydroxymethylglutaryl-CoA synthase of Thermococcus sibiricus (strain DSM 12597 / MM 739).